The following is an 864-amino-acid chain: DNA mismatch repair protein MutS (864 aa).

Residue 613–620 (GPNMGGKS) coordinates ATP.

The protein belongs to the DNA mismatch repair MutS family.

This protein is involved in the repair of mismatches in DNA. It is possible that it carries out the mismatch recognition step. This protein has a weak ATPase activity. The polypeptide is DNA mismatch repair protein MutS (Actinobacillus pleuropneumoniae serotype 7 (strain AP76)).